The following is a 414-amino-acid chain: Serine/threonine transporter SstT (414 aa).

Topologically, residues T2–H15 are cytoplasmic. A helical transmembrane segment spans residues G16 to S36. The Periplasmic portion of the chain corresponds to K37–L45. The chain crosses the membrane as a helical span at residues L46–V66. Residues M67–P83 are Cytoplasmic-facing. A helical transmembrane segment spans residues I84 to F104. Residues A105–D142 lie on the Periplasmic side of the membrane. A helical transmembrane segment spans residues A143 to L163. Over R164–N179 the chain is Cytoplasmic. The chain crosses the membrane as a helical span at residues A180–V200. Residues S201–Q217 are Periplasmic-facing. Residues L218–V238 form a helical membrane-spanning segment. At W239–N299 the chain is on the cytoplasmic side. A helical membrane pass occupies residues M300–I320. Topologically, residues P321 to S331 are periplasmic. The helical transmembrane segment at V332 to I352 threads the bilayer. Over P353–N414 the chain is Cytoplasmic.

Belongs to the dicarboxylate/amino acid:cation symporter (DAACS) (TC 2.A.23) family.

Its subcellular location is the cell inner membrane. It carries out the reaction L-serine(in) + Na(+)(in) = L-serine(out) + Na(+)(out). The enzyme catalyses L-threonine(in) + Na(+)(in) = L-threonine(out) + Na(+)(out). Involved in the import of serine and threonine into the cell, with the concomitant import of sodium (symport system). This Shigella flexneri serotype 5b (strain 8401) protein is Serine/threonine transporter SstT.